Consider the following 501-residue polypeptide: Pre-mRNA-splicing factor 38B (501 aa).

A compositionally biased stretch (low complexity) spans 1-11 (MAGSQQQQQQQ). Disordered regions lie at residues 1–28 (MAGS…LPLW) and 208–501 (DQHM…ADSP). The segment covering 243-273 (GDKRRSRTPRRSPSPRKSQNRSRSRSHHRER) has biased composition (basic residues). Residues 281 to 302 (ELERERDRQRKEREGKDRDRDR) are a coiled coil. Over residues 281–328 (ELERERDRQRKEREGKDRDRDRDRDRERDRERDRDRRRSRTPDRNAER) the composition is skewed to basic and acidic residues. Basic residues predominate over residues 329–341 (RRSRSRERRRSRS). The segment covering 342 to 408 (TSRDKRTERK…EEKKHREEKR (67 aa)) has biased composition (basic and acidic residues). Residues 409-435 (SKRSRSRSRDRKHKAERSSKKRSRSGS) show a composition bias toward basic residues. A compositionally biased stretch (basic and acidic residues) spans 437–447 (SRQEAGEEKNR). Over residues 448–468 (KRERSHSKDRQHKRSRSKERS) the composition is skewed to basic residues. The span at 469 to 491 (HRRESSNERIHARQERPSSESGE) shows a compositional bias: basic and acidic residues. The segment covering 492-501 (RTNSVRADSP) has biased composition (polar residues).

It belongs to the PRP38 family.

It is found in the nucleus. May be required for pre-mRNA splicing. The sequence is that of Pre-mRNA-splicing factor 38B (prpf38b) from Danio rerio (Zebrafish).